Reading from the N-terminus, the 239-residue chain is Peptidyl-tRNA hydrolase (239 aa).

Position 14 (Y14) interacts with tRNA. The active-site Proton acceptor is H19. 3 residues coordinate tRNA: F64, N66, and N112.

It belongs to the PTH family. In terms of assembly, monomer.

It localises to the cytoplasm. It catalyses the reaction an N-acyl-L-alpha-aminoacyl-tRNA + H2O = an N-acyl-L-amino acid + a tRNA + H(+). In terms of biological role, hydrolyzes ribosome-free peptidyl-tRNAs (with 1 or more amino acids incorporated), which drop off the ribosome during protein synthesis, or as a result of ribosome stalling. Functionally, catalyzes the release of premature peptidyl moieties from peptidyl-tRNA molecules trapped in stalled 50S ribosomal subunits, and thus maintains levels of free tRNAs and 50S ribosomes. The sequence is that of Peptidyl-tRNA hydrolase from Rhizobium meliloti (strain 1021) (Ensifer meliloti).